Consider the following 88-residue polypeptide: Small ribosomal subunit protein uS17 (88 aa).

Belongs to the universal ribosomal protein uS17 family. Part of the 30S ribosomal subunit.

One of the primary rRNA binding proteins, it binds specifically to the 5'-end of 16S ribosomal RNA. This is Small ribosomal subunit protein uS17 from Pseudomonas fluorescens (strain ATCC BAA-477 / NRRL B-23932 / Pf-5).